The sequence spans 283 residues: Lipoyl synthase (283 aa).

[4Fe-4S] cluster-binding residues include Cys-35, Cys-40, Cys-46, Cys-61, Cys-65, Cys-68, and Ser-273. One can recognise a Radical SAM core domain in the interval 47–262; the sequence is FRSRQATFLI…RERALAMGFK (216 aa).

The protein belongs to the radical SAM superfamily. Lipoyl synthase family. It depends on [4Fe-4S] cluster as a cofactor.

It localises to the cytoplasm. The enzyme catalyses [[Fe-S] cluster scaffold protein carrying a second [4Fe-4S](2+) cluster] + N(6)-octanoyl-L-lysyl-[protein] + 2 oxidized [2Fe-2S]-[ferredoxin] + 2 S-adenosyl-L-methionine + 4 H(+) = [[Fe-S] cluster scaffold protein] + N(6)-[(R)-dihydrolipoyl]-L-lysyl-[protein] + 4 Fe(3+) + 2 hydrogen sulfide + 2 5'-deoxyadenosine + 2 L-methionine + 2 reduced [2Fe-2S]-[ferredoxin]. The protein operates within protein modification; protein lipoylation via endogenous pathway; protein N(6)-(lipoyl)lysine from octanoyl-[acyl-carrier-protein]: step 2/2. Its function is as follows. Catalyzes the radical-mediated insertion of two sulfur atoms into the C-6 and C-8 positions of the octanoyl moiety bound to the lipoyl domains of lipoate-dependent enzymes, thereby converting the octanoylated domains into lipoylated derivatives. The chain is Lipoyl synthase from Geotalea uraniireducens (strain Rf4) (Geobacter uraniireducens).